An 851-amino-acid polypeptide reads, in one-letter code: Protein translocase subunit SecA (851 aa).

ATP-binding positions include Gln-88, 106–110 (GEGKT), and Asp-496. Positions 828, 830, 839, and 840 each coordinate Zn(2+).

This sequence belongs to the SecA family. Monomer and homodimer. Part of the essential Sec protein translocation apparatus which comprises SecA, SecYEG and auxiliary proteins SecDF-YajC and YidC. It depends on Zn(2+) as a cofactor.

It localises to the cell inner membrane. The protein localises to the cytoplasm. The enzyme catalyses ATP + H2O + cellular proteinSide 1 = ADP + phosphate + cellular proteinSide 2.. Its function is as follows. Part of the Sec protein translocase complex. Interacts with the SecYEG preprotein conducting channel. Has a central role in coupling the hydrolysis of ATP to the transfer of proteins into and across the cell membrane, serving as an ATP-driven molecular motor driving the stepwise translocation of polypeptide chains across the membrane. The polypeptide is Protein translocase subunit SecA (Helicobacter hepaticus (strain ATCC 51449 / 3B1)).